The primary structure comprises 111 residues: Class I hydrophobin SC4 (111 aa).

The signal sequence occupies residues 1 to 25 (MRFSLALLALPALAAAAPVPGGGKG). Intrachain disulfides connect Cys30-Cys37, Cys38-Cys72, Cys86-Cys92, and Cys93-Cys106. N-linked (GlcNAc...) asparagine glycosylation occurs at Asn39.

The protein belongs to the fungal hydrophobin family. Self-assembles to form functional amyloid fibrils called rodlets. Self-assembly into fibrillar rodlets occurs spontaneously at hydrophobic:hydrophilic interfaces and the rodlets further associate laterally to form amphipathic monolayers.

The protein localises to the secreted. The protein resides in the cell wall. Its function is as follows. Aerial growth, conidiation, and dispersal of filamentous fungi in the environment rely upon a capability of their secreting small amphipathic proteins called hydrophobins (HPBs) with low sequence identity. Class I can self-assemble into an outermost layer of rodlet bundles on aerial cell surfaces, conferring cellular hydrophobicity that supports fungal growth, development and dispersal; whereas Class II form highly ordered films at water-air interfaces through intermolecular interactions but contribute nothing to the rodlet structure. SC4 is a dikaryon-specific class I hydrophobin that contributes to the formation of aerial hyphae and fruiting bodies. Plays a role within fruiting bodies by preventing gas channels filling with water under wet conditions, probably serving uninterrupted gas exchange. SC4 cannot fully substitute for SC3. Involved in the unusual characteristic of mounds to adhere to and completely envelop adjacent fruiting bodies on mosaic colonies. This chain is Class I hydrophobin SC4, found in Schizophyllum commune (Split gill fungus).